The primary structure comprises 203 residues: Putative 3-methyladenine DNA glycosylase (203 aa).

Belongs to the DNA glycosylase MPG family.

This chain is Putative 3-methyladenine DNA glycosylase, found in Staphylococcus saprophyticus subsp. saprophyticus (strain ATCC 15305 / DSM 20229 / NCIMB 8711 / NCTC 7292 / S-41).